A 217-amino-acid polypeptide reads, in one-letter code: Putative peroxiredoxin Q, chloroplastic (217 aa).

The N-terminal 66 residues, 1–66 (MAFAVSTACR…PSTTGRNRIV (66 aa)), are a transit peptide targeting the chloroplast. The 148-residue stretch at 70–217 (VSKGSAAPNF…GETLKILQSL (148 aa)) folds into the Thioredoxin domain. The active-site Cysteine sulfenic acid (-SOH) intermediate is the cysteine 112. Cysteine 112 and cysteine 117 are oxidised to a cystine.

Belongs to the peroxiredoxin family. BCP/PrxQ subfamily. Monomer.

Its subcellular location is the plastid. The protein resides in the chloroplast thylakoid lumen. The catalysed reaction is a hydroperoxide + [thioredoxin]-dithiol = an alcohol + [thioredoxin]-disulfide + H2O. In terms of biological role, thiol-specific peroxidase that catalyzes the reduction of hydrogen peroxide and organic hydroperoxides to water and alcohols, respectively. Plays a role in cell protection against oxidative stress by detoxifying peroxides. In Oryza sativa subsp. indica (Rice), this protein is Putative peroxiredoxin Q, chloroplastic.